The following is a 148-amino-acid chain: Large ribosomal subunit protein bL9 (148 aa).

This sequence belongs to the bacterial ribosomal protein bL9 family.

In terms of biological role, binds to the 23S rRNA. This chain is Large ribosomal subunit protein bL9, found in Prosthecochloris aestuarii (strain DSM 271 / SK 413).